Reading from the N-terminus, the 333-residue chain is NADH-quinone oxidoreductase subunit H (333 aa).

The next 8 helical transmembrane spans lie at 15 to 35 (FFIF…FVTY), 88 to 108 (FILA…VIPF), 117 to 137 (IGVG…GVLT), 159 to 179 (ISYE…TGSL), 191 to 211 (VWYI…AVAE), 241 to 261 (FFML…TVLF), 273 to 293 (FIPG…LFIW), and 313 to 333 (VLLP…ELFF).

The protein belongs to the complex I subunit 1 family. In terms of assembly, NDH-1 is composed of 14 different subunits. Subunits NuoA, H, J, K, L, M, N constitute the membrane sector of the complex.

Its subcellular location is the cell membrane. It catalyses the reaction a quinone + NADH + 5 H(+)(in) = a quinol + NAD(+) + 4 H(+)(out). In terms of biological role, NDH-1 shuttles electrons from NADH, via FMN and iron-sulfur (Fe-S) centers, to quinones in the respiratory chain. The immediate electron acceptor for the enzyme in this species is believed to be ubiquinone. Couples the redox reaction to proton translocation (for every two electrons transferred, four hydrogen ions are translocated across the cytoplasmic membrane), and thus conserves the redox energy in a proton gradient. This subunit may bind ubiquinone. The sequence is that of NADH-quinone oxidoreductase subunit H from Bacillus cytotoxicus (strain DSM 22905 / CIP 110041 / 391-98 / NVH 391-98).